Reading from the N-terminus, the 350-residue chain is Holliday junction branch migration complex subunit RuvB (350 aa).

A large ATPase domain (RuvB-L) region spans residues 1 to 186; that stretch reads MAGHEEEDER…FGIPLRLDFY (186 aa). Residues leucine 25, arginine 26, glycine 67, lysine 70, threonine 71, threonine 72, 133–135, arginine 176, tyrosine 186, and arginine 223 contribute to the ATP site; that span reads EDF. Threonine 71 is a binding site for Mg(2+). Residues 187 to 257 are small ATPAse domain (RuvB-S); sequence ETDELVQIVT…IADAALNRLE (71 aa). Residues 260–350 are head domain (RuvB-H); sequence GRGLDAMDRR…VQPDLWSDAP (91 aa). DNA contacts are provided by arginine 296, arginine 315, and arginine 320.

The protein belongs to the RuvB family. As to quaternary structure, homohexamer. Forms an RuvA(8)-RuvB(12)-Holliday junction (HJ) complex. HJ DNA is sandwiched between 2 RuvA tetramers; dsDNA enters through RuvA and exits via RuvB. An RuvB hexamer assembles on each DNA strand where it exits the tetramer. Each RuvB hexamer is contacted by two RuvA subunits (via domain III) on 2 adjacent RuvB subunits; this complex drives branch migration. In the full resolvosome a probable DNA-RuvA(4)-RuvB(12)-RuvC(2) complex forms which resolves the HJ.

It is found in the cytoplasm. The catalysed reaction is ATP + H2O = ADP + phosphate + H(+). In terms of biological role, the RuvA-RuvB-RuvC complex processes Holliday junction (HJ) DNA during genetic recombination and DNA repair, while the RuvA-RuvB complex plays an important role in the rescue of blocked DNA replication forks via replication fork reversal (RFR). RuvA specifically binds to HJ cruciform DNA, conferring on it an open structure. The RuvB hexamer acts as an ATP-dependent pump, pulling dsDNA into and through the RuvAB complex. RuvB forms 2 homohexamers on either side of HJ DNA bound by 1 or 2 RuvA tetramers; 4 subunits per hexamer contact DNA at a time. Coordinated motions by a converter formed by DNA-disengaged RuvB subunits stimulates ATP hydrolysis and nucleotide exchange. Immobilization of the converter enables RuvB to convert the ATP-contained energy into a lever motion, pulling 2 nucleotides of DNA out of the RuvA tetramer per ATP hydrolyzed, thus driving DNA branch migration. The RuvB motors rotate together with the DNA substrate, which together with the progressing nucleotide cycle form the mechanistic basis for DNA recombination by continuous HJ branch migration. Branch migration allows RuvC to scan DNA until it finds its consensus sequence, where it cleaves and resolves cruciform DNA. The sequence is that of Holliday junction branch migration complex subunit RuvB from Rhodospirillum rubrum (strain ATCC 11170 / ATH 1.1.1 / DSM 467 / LMG 4362 / NCIMB 8255 / S1).